Here is a 762-residue protein sequence, read N- to C-terminus: Phosphoribosylformylglycinamidine synthase subunit PurL (762 aa).

Residue His-58 is part of the active site. Tyr-61 and Arg-105 together coordinate ATP. Glu-107 is a Mg(2+) binding site. Substrate contacts are provided by residues 108-111 (SHNH) and Arg-130. The active-site Proton acceptor is the His-109. Mg(2+) is bound at residue Asp-131. Gln-255 is a binding site for substrate. A Mg(2+)-binding site is contributed by Asp-283. 327–329 (ESQ) is a substrate binding site. The ATP site is built by Asn-513 and Gly-550. Asn-551 lines the Mg(2+) pocket. Ser-553 contributes to the substrate binding site.

The protein belongs to the FGAMS family. Monomer. Part of the FGAM synthase complex composed of 1 PurL, 1 PurQ and 2 PurS subunits.

Its subcellular location is the cytoplasm. It catalyses the reaction N(2)-formyl-N(1)-(5-phospho-beta-D-ribosyl)glycinamide + L-glutamine + ATP + H2O = 2-formamido-N(1)-(5-O-phospho-beta-D-ribosyl)acetamidine + L-glutamate + ADP + phosphate + H(+). It participates in purine metabolism; IMP biosynthesis via de novo pathway; 5-amino-1-(5-phospho-D-ribosyl)imidazole from N(2)-formyl-N(1)-(5-phospho-D-ribosyl)glycinamide: step 1/2. Its function is as follows. Part of the phosphoribosylformylglycinamidine synthase complex involved in the purines biosynthetic pathway. Catalyzes the ATP-dependent conversion of formylglycinamide ribonucleotide (FGAR) and glutamine to yield formylglycinamidine ribonucleotide (FGAM) and glutamate. The FGAM synthase complex is composed of three subunits. PurQ produces an ammonia molecule by converting glutamine to glutamate. PurL transfers the ammonia molecule to FGAR to form FGAM in an ATP-dependent manner. PurS interacts with PurQ and PurL and is thought to assist in the transfer of the ammonia molecule from PurQ to PurL. The protein is Phosphoribosylformylglycinamidine synthase subunit PurL of Corynebacterium glutamicum (strain ATCC 13032 / DSM 20300 / JCM 1318 / BCRC 11384 / CCUG 27702 / LMG 3730 / NBRC 12168 / NCIMB 10025 / NRRL B-2784 / 534).